Consider the following 248-residue polypeptide: Large ribosomal subunit protein uL30 (248 aa).

Positions 22-42 are disordered; it reads KSQEKARAERQAEIEKKKAAN. A compositionally biased stretch (basic and acidic residues) spans 24-42; the sequence is QEKARAERQAEIEKKKAAN.

Belongs to the universal ribosomal protein uL30 family. Component of the large ribosomal subunit (LSU). Mature N.crassa ribosomes consist of a small (40S) and a large (60S) subunit. The 40S small subunit contains 1 molecule of ribosomal RNA (18S rRNA) and at least 32 different proteins. The large 60S subunit contains 3 rRNA molecules (26S, 5.8S and 5S rRNA) and at least 42 different proteins.

The protein resides in the cytoplasm. Component of the ribosome, a large ribonucleoprotein complex responsible for the synthesis of proteins in the cell. The small ribosomal subunit (SSU) binds messenger RNAs (mRNAs) and translates the encoded message by selecting cognate aminoacyl-transfer RNA (tRNA) molecules. The large subunit (LSU) contains the ribosomal catalytic site termed the peptidyl transferase center (PTC), which catalyzes the formation of peptide bonds, thereby polymerizing the amino acids delivered by tRNAs into a polypeptide chain. The nascent polypeptides leave the ribosome through a tunnel in the LSU and interact with protein factors that function in enzymatic processing, targeting, and the membrane insertion of nascent chains at the exit of the ribosomal tunnel. The polypeptide is Large ribosomal subunit protein uL30 (rpl-7) (Neurospora crassa (strain ATCC 24698 / 74-OR23-1A / CBS 708.71 / DSM 1257 / FGSC 987)).